A 427-amino-acid chain; its full sequence is Glutamate-1-semialdehyde 2,1-aminomutase (427 aa).

Position 265 is an N6-(pyridoxal phosphate)lysine (lysine 265).

This sequence belongs to the class-III pyridoxal-phosphate-dependent aminotransferase family. HemL subfamily. In terms of assembly, homodimer. The cofactor is pyridoxal 5'-phosphate.

Its subcellular location is the cytoplasm. It catalyses the reaction (S)-4-amino-5-oxopentanoate = 5-aminolevulinate. It participates in porphyrin-containing compound metabolism; protoporphyrin-IX biosynthesis; 5-aminolevulinate from L-glutamyl-tRNA(Glu): step 2/2. This Bordetella petrii (strain ATCC BAA-461 / DSM 12804 / CCUG 43448) protein is Glutamate-1-semialdehyde 2,1-aminomutase.